The following is a 199-amino-acid chain: MYEGVVQDLIDELGRLPGVGPKSAQRIAFHILQAEPVDVRRLAQALMEVKAKVRFCATCGNVAQEEQCNICRDTRRDPSVICVVEEPKDVVAIERTREFRGRYHVLGGAISPIDGVGPDDLRIRELLARLADGSVTELILATDPNLEGEATATYLARMIKPMGLKVTRLASGLPVGGDLEYADEVTLGRAFEGRRLLDV.

The C4-type zinc-finger motif lies at 56 to 71; that stretch reads CATCGNVAQEEQCNIC. In terms of domain architecture, Toprim spans 79–174; it reads SVICVVEEPK…KVTRLASGLP (96 aa).

The protein belongs to the RecR family.

Functionally, may play a role in DNA repair. It seems to be involved in an RecBC-independent recombinational process of DNA repair. It may act with RecF and RecO. The protein is Recombination protein RecR of Streptomyces coelicolor (strain ATCC BAA-471 / A3(2) / M145).